Here is a 284-residue protein sequence, read N- to C-terminus: Ubiquinone biosynthesis protein COQ4, mitochondrial (284 aa).

Zn(2+)-binding residues include histidine 165, aspartate 166, histidine 169, and glutamate 181.

This sequence belongs to the COQ4 family. Component of a multi-subunit COQ enzyme complex, composed of at least COQ3, COQ4, COQ5, COQ6, COQ7 and COQ9. Zn(2+) is required as a cofactor.

The protein resides in the mitochondrion inner membrane. The catalysed reaction is a 4-hydroxy-3-methoxy-5-(all-trans-polyprenyl)benzoate + H(+) = a 2-methoxy-6-(all-trans-polyprenyl)phenol + CO2. Its pathway is cofactor biosynthesis; ubiquinone biosynthesis. Its function is as follows. Lyase that catalyzes the C1-decarboxylation of 4-hydroxy-3-methoxy-5-(all-trans-polyprenyl)benzoic acid into 2-methoxy-6-(all-trans-polyprenyl)phenol during ubiquinone biosynthesis. The polypeptide is Ubiquinone biosynthesis protein COQ4, mitochondrial (Blastomyces gilchristii (strain SLH14081) (Blastomyces dermatitidis)).